We begin with the raw amino-acid sequence, 38 residues long: Photosystem II reaction center protein L (38 aa).

Residues 17–37 form a helical membrane-spanning segment; it reads SLYWGLLLIFVLAVSFSNYFF.

Belongs to the PsbL family. In terms of assembly, PSII is composed of 1 copy each of membrane proteins PsbA, PsbB, PsbC, PsbD, PsbE, PsbF, PsbH, PsbI, PsbJ, PsbK, PsbL, PsbM, PsbT, PsbX, PsbY, PsbZ, Psb30/Ycf12, at least 3 peripheral proteins of the oxygen-evolving complex and a large number of cofactors. It forms dimeric complexes.

Its subcellular location is the plastid membrane. In terms of biological role, one of the components of the core complex of photosystem II (PSII). PSII is a light-driven water:plastoquinone oxidoreductase that uses light energy to abstract electrons from H(2)O, generating O(2) and a proton gradient subsequently used for ATP formation. It consists of a core antenna complex that captures photons, and an electron transfer chain that converts photonic excitation into a charge separation. This subunit is found at the monomer-monomer interface and is required for correct PSII assembly and/or dimerization. The chain is Photosystem II reaction center protein L from Aneura mirabilis (Parasitic liverwort).